The sequence spans 427 residues: Serine hydroxymethyltransferase (427 aa).

(6S)-5,6,7,8-tetrahydrofolate is bound by residues Leu122 and 126–128 (GHL). Position 231 is an N6-(pyridoxal phosphate)lysine (Lys231). (6S)-5,6,7,8-tetrahydrofolate-binding positions include Glu247 and 355 to 357 (SPF).

This sequence belongs to the SHMT family. Homodimer. Requires pyridoxal 5'-phosphate as cofactor.

The protein localises to the cytoplasm. It carries out the reaction (6R)-5,10-methylene-5,6,7,8-tetrahydrofolate + glycine + H2O = (6S)-5,6,7,8-tetrahydrofolate + L-serine. The protein operates within one-carbon metabolism; tetrahydrofolate interconversion. Its pathway is amino-acid biosynthesis; glycine biosynthesis; glycine from L-serine: step 1/1. Catalyzes the reversible interconversion of serine and glycine with tetrahydrofolate (THF) serving as the one-carbon carrier. This reaction serves as the major source of one-carbon groups required for the biosynthesis of purines, thymidylate, methionine, and other important biomolecules. Also exhibits THF-independent aldolase activity toward beta-hydroxyamino acids, producing glycine and aldehydes, via a retro-aldol mechanism. This chain is Serine hydroxymethyltransferase, found in Synechocystis sp. (strain ATCC 27184 / PCC 6803 / Kazusa).